Here is a 150-residue protein sequence, read N- to C-terminus: Probable cyclase FGR4 (150 aa).

It functions in the pathway secondary metabolite biosynthesis. In terms of biological role, probable cyclase; part of the gene cluster that mediates the biosynthesis of the tetraketides fugralins such as linear fugralin A and cyclic fugralin B, volatile compounds that play a role in the asexual reproductive cycle but are not involved in pathogenicity. Fugralin B is similar to fugralin A except for a cyclization between the carboxylic acid C-8 and the alcohol on C-4 resulting in a six membered lactone ring, probably catalyzed by the cyclase FGR4. One of the key features of fugralins is the presence of a double methyl group, which is only rarely encountered in fungal secondary metabolites. As the fugralins cluster does not contain an independent methyltransferase, the PKS FGR1 is probably responsible for adding two methyl groups to the same carbon atom. The exact role of the individual cluster genes remains unknown and further work is needed to unravel the biosynthetic pathway. The chain is Probable cyclase FGR4 from Gibberella zeae (strain ATCC MYA-4620 / CBS 123657 / FGSC 9075 / NRRL 31084 / PH-1) (Wheat head blight fungus).